A 143-amino-acid polypeptide reads, in one-letter code: Large ribosomal subunit protein uL11 (143 aa).

This sequence belongs to the universal ribosomal protein uL11 family. Part of the ribosomal stalk of the 50S ribosomal subunit. Interacts with L10 and the large rRNA to form the base of the stalk. L10 forms an elongated spine to which L12 dimers bind in a sequential fashion forming a multimeric L10(L12)X complex. Post-translationally, one or more lysine residues are methylated.

In terms of biological role, forms part of the ribosomal stalk which helps the ribosome interact with GTP-bound translation factors. The chain is Large ribosomal subunit protein uL11 from Nitrosomonas eutropha (strain DSM 101675 / C91 / Nm57).